The chain runs to 198 residues: Putative manganese efflux pump MntP (198 aa).

The next 6 membrane-spanning stretches (helical) occupy residues 3 to 23, 37 to 57, 65 to 85, 105 to 127, 131 to 153, and 171 to 191; these read SIELLIIAVGLSMDAFAVAIC, VLTGCFFGGFQALMPLLGYLL, ITSIDHWIAFGLLSLIGINMI, SLTVMAFATSIDALAIGVTFAFL, IIPAVTMIGITTFTFSFLGVKIG, and ILIGMGCKILFDHLGVISFVF.

This sequence belongs to the MntP (TC 9.B.29) family.

It localises to the cell membrane. Probably functions as a manganese efflux pump. The chain is Putative manganese efflux pump MntP from Acetivibrio thermocellus (strain ATCC 27405 / DSM 1237 / JCM 9322 / NBRC 103400 / NCIMB 10682 / NRRL B-4536 / VPI 7372) (Clostridium thermocellum).